Here is a 775-residue protein sequence, read N- to C-terminus: tRNA(Met) cytidine acetyltransferase TmcA (775 aa).

Disordered regions lie at residues 1–33 and 191–215; these read MPTTVSGPIKSVPGERRDRQVHTGASATTGMDI and TVEQDGLTDPPPSRPVPSPTPPTDA. Residues 199–212 are compositionally biased toward pro residues; that stretch reads DPPPSRPVPSPTPP. ATP-binding positions include Gln-230, 254-263, and Arg-403; that span reads GRGKSSAAGL. One can recognise an N-acetyltransferase domain in the interval 438-623; that stretch reads VEYRQLSAAD…YSVVMLDPCS (186 aa). Acetyl-CoA is bound by residues 549–551, 556–562, and Glu-588; these read IAT and RSRGLGS.

The protein belongs to the RNA cytidine acetyltransferase family. TmcA subfamily.

Its subcellular location is the cytoplasm. It catalyses the reaction cytidine(34) in elongator tRNA(Met) + acetyl-CoA + ATP + H2O = N(4)-acetylcytidine(34) in elongator tRNA(Met) + ADP + phosphate + CoA + H(+). Catalyzes the formation of N(4)-acetylcytidine (ac(4)C) at the wobble position of tRNA(Met), by using acetyl-CoA as an acetyl donor and ATP (or GTP). The sequence is that of tRNA(Met) cytidine acetyltransferase TmcA from Haloarcula marismortui (strain ATCC 43049 / DSM 3752 / JCM 8966 / VKM B-1809) (Halobacterium marismortui).